A 552-amino-acid chain; its full sequence is Protein FAM234A (552 aa).

Over residues 1-22 the composition is skewed to basic and acidic residues; sequence MLDHKDLEAEIHPLKNEERKSQ. The disordered stretch occupies residues 1–40; the sequence is MLDHKDLEAEIHPLKNEERKSQENLGNPSKNEDNVKSAPP. Residues 1 to 49 lie on the Cytoplasmic side of the membrane; that stretch reads MLDHKDLEAEIHPLKNEERKSQENLGNPSKNEDNVKSAPPQSRLSRCRA. The residue at position 21 (Ser21) is a Phosphoserine. A helical; Signal-anchor for type II membrane protein membrane pass occupies residues 50 to 70; the sequence is AAFFLSLFLCLFVVFVVSFVI. Residues 71 to 552 lie on the Extracellular side of the membrane; sequence PCPDRPASQR…FSRLRYQSEA (482 aa). 4 N-linked (GlcNAc...) asparagine glycosylation sites follow: Asn116, Asn314, Asn389, and Asn473.

It belongs to the FAM234 family.

The protein resides in the membrane. In Homo sapiens (Human), this protein is Protein FAM234A.